The primary structure comprises 203 residues: E3 ubiquitin-protein ligase RNF152 (203 aa).

An RING-type zinc finger spans residues 12–55 (CQICFNYYSPRRRPKLLDCKHTCCSVCLQQMRTSQKDVRCPWCR). Residues 106 to 165 (ISKERALLPGDMGCRLLPGSQQKSVTVVTVPAEQRPLQGGAPQEAVEEEPDRRGVAKSST) form a necessary for interaction with RRAGA region. The chain crosses the membrane as a helical span at residues 167–187 (SGVCTVILVACVLVFLLGIVL).

Belongs to the RNF152 family. As to quaternary structure, interacts with RRAGA (inactive GDP-bound form); stimulated by amino acid starvation. In terms of processing, ubiquitinated. Autoubiquitinated in vitro, leading to its degradation by the proteasome.

It is found in the lysosome membrane. It carries out the reaction S-ubiquitinyl-[E2 ubiquitin-conjugating enzyme]-L-cysteine + [acceptor protein]-L-lysine = [E2 ubiquitin-conjugating enzyme]-L-cysteine + N(6)-ubiquitinyl-[acceptor protein]-L-lysine.. It participates in protein modification; protein ubiquitination. Its function is as follows. E3 ubiquitin-protein ligase that acts as a negative regulator of mTORC1 signaling by mediating ubiquitination of RagA/RRAGA and RHEB. Catalyzes 'Lys-63'-linked polyubiquitination of RagA/RRAGA in response to amino acid starvation, thereby regulating mTORC1 signaling. Also mediates monoubiquitination of RHEB, promoting its association with the TSC-TBC complex and subsequent inhibition. Also mediates 'Lys-48'-linked polyubiquitination of target proteins and their subsequent targeting to the proteasome for degradation. Induces apoptosis when overexpressed. The chain is E3 ubiquitin-protein ligase RNF152 from Ailuropoda melanoleuca (Giant panda).